The primary structure comprises 652 residues: Threonine--tRNA ligase (652 aa).

A TGS domain is found at 1–64 (MPDVIRITFP…HEDGELVIIT (64 aa)). Residues 245 to 542 (DHRKLGKELE…LIEEYKGAFP (298 aa)) form a catalytic region. Zn(2+) is bound by residues cysteine 338, histidine 389, and histidine 519.

This sequence belongs to the class-II aminoacyl-tRNA synthetase family. Homodimer. The cofactor is Zn(2+).

It localises to the cytoplasm. The catalysed reaction is tRNA(Thr) + L-threonine + ATP = L-threonyl-tRNA(Thr) + AMP + diphosphate + H(+). Functionally, catalyzes the attachment of threonine to tRNA(Thr) in a two-step reaction: L-threonine is first activated by ATP to form Thr-AMP and then transferred to the acceptor end of tRNA(Thr). Also edits incorrectly charged L-seryl-tRNA(Thr). The sequence is that of Threonine--tRNA ligase from Geobacillus kaustophilus (strain HTA426).